The sequence spans 80 residues: 14-3-3-like protein 1 (80 aa).

This sequence belongs to the 14-3-3 family.

The polypeptide is 14-3-3-like protein 1 (Pseudotsuga menziesii (Douglas-fir)).